Here is a 404-residue protein sequence, read N- to C-terminus: Probable tRNA sulfurtransferase (404 aa).

Residues 60-165 (HEVAESLKEI…DEAAYISYED (106 aa)) form the THUMP domain. ATP-binding positions include 183–184 (ML), 208–209 (HF), arginine 265, glycine 287, and glutamine 296.

It belongs to the ThiI family.

The protein resides in the cytoplasm. The catalysed reaction is [ThiI sulfur-carrier protein]-S-sulfanyl-L-cysteine + a uridine in tRNA + 2 reduced [2Fe-2S]-[ferredoxin] + ATP + H(+) = [ThiI sulfur-carrier protein]-L-cysteine + a 4-thiouridine in tRNA + 2 oxidized [2Fe-2S]-[ferredoxin] + AMP + diphosphate. The enzyme catalyses [ThiS sulfur-carrier protein]-C-terminal Gly-Gly-AMP + S-sulfanyl-L-cysteinyl-[cysteine desulfurase] + AH2 = [ThiS sulfur-carrier protein]-C-terminal-Gly-aminoethanethioate + L-cysteinyl-[cysteine desulfurase] + A + AMP + 2 H(+). Its pathway is cofactor biosynthesis; thiamine diphosphate biosynthesis. Catalyzes the ATP-dependent transfer of a sulfur to tRNA to produce 4-thiouridine in position 8 of tRNAs, which functions as a near-UV photosensor. Also catalyzes the transfer of sulfur to the sulfur carrier protein ThiS, forming ThiS-thiocarboxylate. This is a step in the synthesis of thiazole, in the thiamine biosynthesis pathway. The sulfur is donated as persulfide by IscS. The sequence is that of Probable tRNA sulfurtransferase from Streptococcus agalactiae serotype V (strain ATCC BAA-611 / 2603 V/R).